The following is a 67-amino-acid chain: ATP synthase F(0) complex subunit 8 (67 aa).

A helical membrane pass occupies residues 8-24 (TWFTTILATITTLFILF). Lys-54 bears the N6-acetyllysine; alternate mark. Lys-54 is subject to N6-succinyllysine; alternate. N6-acetyllysine is present on Lys-57.

It belongs to the ATPase protein 8 family. In terms of assembly, component of the ATP synthase complex composed at least of ATP5F1A/subunit alpha, ATP5F1B/subunit beta, ATP5MC1/subunit c (homooctomer), MT-ATP6/subunit a, MT-ATP8/subunit 8, ATP5ME/subunit e, ATP5MF/subunit f, ATP5MG/subunit g, ATP5MK/subunit k, ATP5MJ/subunit j, ATP5F1C/subunit gamma, ATP5F1D/subunit delta, ATP5F1E/subunit epsilon, ATP5PF/subunit F6, ATP5PB/subunit b, ATP5PD/subunit d, ATP5PO/subunit OSCP. ATP synthase complex consists of a soluble F(1) head domain (subunits alpha(3) and beta(3)) - the catalytic core - and a membrane F(0) domain - the membrane proton channel (subunits c, a, 8, e, f, g, k and j). These two domains are linked by a central stalk (subunits gamma, delta, and epsilon) rotating inside the F1 region and a stationary peripheral stalk (subunits F6, b, d, and OSCP). Interacts with PRICKLE3.

Its subcellular location is the mitochondrion membrane. Subunit 8, of the mitochondrial membrane ATP synthase complex (F(1)F(0) ATP synthase or Complex V) that produces ATP from ADP in the presence of a proton gradient across the membrane which is generated by electron transport complexes of the respiratory chain. ATP synthase complex consist of a soluble F(1) head domain - the catalytic core - and a membrane F(1) domain - the membrane proton channel. These two domains are linked by a central stalk rotating inside the F(1) region and a stationary peripheral stalk. During catalysis, ATP synthesis in the catalytic domain of F(1) is coupled via a rotary mechanism of the central stalk subunits to proton translocation. In vivo, can only synthesize ATP although its ATP hydrolase activity can be activated artificially in vitro. Part of the complex F(0) domain. The sequence is that of ATP synthase F(0) complex subunit 8 from Talpa europaea (European mole).